Consider the following 86-residue polypeptide: Cytochrome c oxidase subunit 6B1 (86 aa).

An N-acetylalanine modification is found at alanine 2. Residues 27–73 (TRNCWQNYLDFHRCQKAMTAKGGDISVCEWYQRVYQSLCPTSWVTDW) form the CHCH domain. Residues 30–40 (CWQNYLDFHRC) carry the Cx9C motif motif. 2 cysteine pairs are disulfide-bonded: cysteine 30/cysteine 65 and cysteine 40/cysteine 54. A Cx10C motif motif is present at residues 54–65 (CEWYQRVYQSLC).

It belongs to the cytochrome c oxidase subunit 6B family. In terms of assembly, component of the cytochrome c oxidase (complex IV, CIV), a multisubunit enzyme composed of 14 subunits. The complex is composed of a catalytic core of 3 subunits MT-CO1, MT-CO2 and MT-CO3, encoded in the mitochondrial DNA, and 11 supernumerary subunits COX4I, COX5A, COX5B, COX6A, COX6B, COX6C, COX7A, COX7B, COX7C, COX8 and NDUFA4, which are encoded in the nuclear genome. The complex exists as a monomer or a dimer and forms supercomplexes (SCs) in the inner mitochondrial membrane with NADH-ubiquinone oxidoreductase (complex I, CI) and ubiquinol-cytochrome c oxidoreductase (cytochrome b-c1 complex, complex III, CIII), resulting in different assemblies (supercomplex SCI(1)III(2)IV(1) and megacomplex MCI(2)III(2)IV(2)).

It localises to the mitochondrion inner membrane. Its pathway is energy metabolism; oxidative phosphorylation. Its function is as follows. Component of the cytochrome c oxidase, the last enzyme in the mitochondrial electron transport chain which drives oxidative phosphorylation. The respiratory chain contains 3 multisubunit complexes succinate dehydrogenase (complex II, CII), ubiquinol-cytochrome c oxidoreductase (cytochrome b-c1 complex, complex III, CIII) and cytochrome c oxidase (complex IV, CIV), that cooperate to transfer electrons derived from NADH and succinate to molecular oxygen, creating an electrochemical gradient over the inner membrane that drives transmembrane transport and the ATP synthase. Cytochrome c oxidase is the component of the respiratory chain that catalyzes the reduction of oxygen to water. Electrons originating from reduced cytochrome c in the intermembrane space (IMS) are transferred via the dinuclear copper A center (CU(A)) of subunit 2 and heme A of subunit 1 to the active site in subunit 1, a binuclear center (BNC) formed by heme A3 and copper B (CU(B)). The BNC reduces molecular oxygen to 2 water molecules using 4 electrons from cytochrome c in the IMS and 4 protons from the mitochondrial matrix. The chain is Cytochrome c oxidase subunit 6B1 (COX6B1) from Pongo abelii (Sumatran orangutan).